The sequence spans 490 residues: Glycine--tRNA ligase (490 aa).

Substrate-binding residues include Arg-99 and Glu-163. ATP contacts are provided by residues 195-197 (RNE), 205-210 (FRTREF), 282-283 (EL), and 326-329 (GLTR). 210 to 214 (FEQME) is a substrate binding site. 322 to 326 (EPAAG) provides a ligand contact to substrate. Residues 470-490 (PVEMGGEPWPESGVQEAGGLY) form a disordered region.

The protein belongs to the class-II aminoacyl-tRNA synthetase family. In terms of assembly, homodimer.

It is found in the cytoplasm. It carries out the reaction tRNA(Gly) + glycine + ATP = glycyl-tRNA(Gly) + AMP + diphosphate. In terms of biological role, catalyzes the attachment of glycine to tRNA(Gly). The polypeptide is Glycine--tRNA ligase (Bifidobacterium longum (strain NCC 2705)).